The sequence spans 763 residues: 5-methyltetrahydropteroyltriglutamate--homocysteine methyltransferase (763 aa).

5-methyltetrahydropteroyltri-L-glutamate is bound by residues 16–19 (RELK) and K121. L-homocysteine is bound by residues 440–442 (IGS) and E493. Residues 440 to 442 (IGS) and E493 each bind L-methionine. 5-methyltetrahydropteroyltri-L-glutamate is bound by residues 524–525 (RC) and W570. Residue D608 coordinates L-homocysteine. D608 contributes to the L-methionine binding site. A 5-methyltetrahydropteroyltri-L-glutamate-binding site is contributed by E614. Residues H650, C652, and E674 each contribute to the Zn(2+) site. The active-site Proton donor is H703. C735 contributes to the Zn(2+) binding site.

The protein belongs to the vitamin-B12 independent methionine synthase family. Zn(2+) serves as cofactor.

It catalyses the reaction 5-methyltetrahydropteroyltri-L-glutamate + L-homocysteine = tetrahydropteroyltri-L-glutamate + L-methionine. The protein operates within amino-acid biosynthesis; L-methionine biosynthesis via de novo pathway; L-methionine from L-homocysteine (MetE route): step 1/1. Catalyzes the transfer of a methyl group from 5-methyltetrahydrofolate to homocysteine resulting in methionine formation. In Paraburkholderia phymatum (strain DSM 17167 / CIP 108236 / LMG 21445 / STM815) (Burkholderia phymatum), this protein is 5-methyltetrahydropteroyltriglutamate--homocysteine methyltransferase.